Reading from the N-terminus, the 497-residue chain is PHD finger protein 10 (497 aa).

Positions 1 to 13 are enriched in low complexity; it reads MTAAGPGAAPSPG. A disordered region spans residues 1–61; it reads MTAAGPGAAP…SSRSCETSSQ (61 aa). 3 positions are modified to phosphoserine: serine 11, serine 35, and serine 49. The segment at 88 to 184 is essential to induce neural progenitor proliferation; it reads MLQEQVSEYL…HYKEYSQMQQ (97 aa). Positions 88–294 are SAY; the sequence is MLQEQVSEYL…PPLDPELPAL (207 aa). Residue lysine 240 forms a Glycyl lysine isopeptide (Lys-Gly) (interchain with G-Cter in SUMO2) linkage. Serine 269 carries the phosphoserine modification. The span at 284-295 shows a compositional bias: low complexity; sequence EPPLDPELPALD. Positions 284–368 are disordered; it reads EPPLDPELPA…RSVLSKSAPG (85 aa). The tract at residues 291-333 is essential to induce neural progenitor proliferation; that stretch reads LPALDSDGDSDDGEDGGGDEKRKNKGTSDSSSGNVSEGDSPPD. 4 positions are modified to phosphoserine: serine 296, serine 300, serine 326, and serine 330. Over residues 296–307 the composition is skewed to acidic residues; that stretch reads SDGDSDDGEDGG. Over residues 317–327 the composition is skewed to polar residues; sequence TSDSSSGNVSE. Positions 337–358 are enriched in basic and acidic residues; the sequence is DTFHGRQKSKDKMATPRKDGSK. The PHD-type 1; degenerate zinc finger occupies 378–435; it reads LCGICLKGKESNKKGKAESLIHCSQCDNSGHPSCLDMTMELVSMIKTYPWQCMECKTC. Lysine 384 is covalently cross-linked (Glycyl lysine isopeptide (Lys-Gly) (interchain with G-Cter in SUMO2)). The segment at 437–480 adopts a PHD-type 2; degenerate zinc-finger fold; the sequence is ICGQPHHEEEMMFCDVCDRGYHTFCVGLGAIPSGRWICDCCQRA.

Belongs to the SAYP family. Component of neural progenitors-specific chromatin remodeling complex (npBAF complex) composed of at least, ARID1A/BAF250A or ARID1B/BAF250B, SMARCD1/BAF60A, SMARCD3/BAF60C, SMARCA2/BRM/BAF190B, SMARCA4/BRG1/BAF190A, SMARCB1/BAF47, SMARCC1/BAF155, SMARCE1/BAF57, SMARCC2/BAF170, PHF10/BAF45A, ACTL6A/BAF53A and actin. Interacts with ACTL6A/BAF53A, SMARCA2/BRM/BAF190B, SMARCA4/BRG1/BAF190A and PBRM1/BAF180. As to expression, widely expressed. Expressed selectively in neural stem and progenitor cells (at protein level).

The protein localises to the nucleus. In terms of biological role, involved in transcription activity regulation by chromatin remodeling. Belongs to the neural progenitors-specific chromatin remodeling complex (npBAF complex) and is required for the proliferation of neural progenitors. During neural development a switch from a stem/progenitor to a post-mitotic chromatin remodeling mechanism occurs as neurons exit the cell cycle and become committed to their adult state. The transition from proliferating neural stem/progenitor cells to post-mitotic neurons requires a switch in subunit composition of the npBAF and nBAF complexes. As neural progenitors exit mitosis and differentiate into neurons, npBAF complexes which contain ACTL6A/BAF53A and PHF10/BAF45A, are exchanged for homologous alternative ACTL6B/BAF53B and DPF1/BAF45B or DPF3/BAF45C subunits in neuron-specific complexes (nBAF). The npBAF complex is essential for the self-renewal/proliferative capacity of the multipotent neural stem cells. The nBAF complex along with CREST plays a role regulating the activity of genes essential for dendrite growth. The sequence is that of PHD finger protein 10 (Phf10) from Mus musculus (Mouse).